A 284-amino-acid chain; its full sequence is ATP synthase gamma chain (284 aa).

Belongs to the ATPase gamma chain family. F-type ATPases have 2 components, CF(1) - the catalytic core - and CF(0) - the membrane proton channel. CF(1) has five subunits: alpha(3), beta(3), gamma(1), delta(1), epsilon(1). CF(0) has three main subunits: a, b and c.

The protein localises to the cell membrane. In terms of biological role, produces ATP from ADP in the presence of a proton gradient across the membrane. The gamma chain is believed to be important in regulating ATPase activity and the flow of protons through the CF(0) complex. The protein is ATP synthase gamma chain of Pelotomaculum thermopropionicum (strain DSM 13744 / JCM 10971 / SI).